Consider the following 194-residue polypeptide: Holliday junction branch migration complex subunit RuvA (194 aa).

A domain I region spans residues 1-64 (MIAYIQGSIT…QDAHTLYGFS (64 aa)). The segment at 65–143 (TIEEKQCFLQ…KVGNMLSLQP (79 aa)) is domain II. A flexible linker region spans residues 144-150 (SGQEAIY). The tract at residues 150–194 (YQEALAALSKLGIHKSTAEKTVAAILKEHQGEITVESLIKLALKG) is domain III.

It belongs to the RuvA family. In terms of assembly, homotetramer. Forms an RuvA(8)-RuvB(12)-Holliday junction (HJ) complex. HJ DNA is sandwiched between 2 RuvA tetramers; dsDNA enters through RuvA and exits via RuvB. An RuvB hexamer assembles on each DNA strand where it exits the tetramer. Each RuvB hexamer is contacted by two RuvA subunits (via domain III) on 2 adjacent RuvB subunits; this complex drives branch migration. In the full resolvosome a probable DNA-RuvA(4)-RuvB(12)-RuvC(2) complex forms which resolves the HJ.

The protein resides in the cytoplasm. In terms of biological role, the RuvA-RuvB-RuvC complex processes Holliday junction (HJ) DNA during genetic recombination and DNA repair, while the RuvA-RuvB complex plays an important role in the rescue of blocked DNA replication forks via replication fork reversal (RFR). RuvA specifically binds to HJ cruciform DNA, conferring on it an open structure. The RuvB hexamer acts as an ATP-dependent pump, pulling dsDNA into and through the RuvAB complex. HJ branch migration allows RuvC to scan DNA until it finds its consensus sequence, where it cleaves and resolves the cruciform DNA. In Amoebophilus asiaticus (strain 5a2), this protein is Holliday junction branch migration complex subunit RuvA.